The primary structure comprises 363 residues: tRNA U34 carboxymethyltransferase (363 aa).

Residues K101, W134, K139, G159, 181-183 (DPS), 221-222 (LE), M237, Y241, and R356 each bind carboxy-S-adenosyl-L-methionine.

Belongs to the class I-like SAM-binding methyltransferase superfamily. CmoB family. As to quaternary structure, homotetramer.

It carries out the reaction carboxy-S-adenosyl-L-methionine + 5-hydroxyuridine(34) in tRNA = 5-carboxymethoxyuridine(34) in tRNA + S-adenosyl-L-homocysteine + H(+). Functionally, catalyzes carboxymethyl transfer from carboxy-S-adenosyl-L-methionine (Cx-SAM) to 5-hydroxyuridine (ho5U) to form 5-carboxymethoxyuridine (cmo5U) at position 34 in tRNAs. This Psychrobacter cryohalolentis (strain ATCC BAA-1226 / DSM 17306 / VKM B-2378 / K5) protein is tRNA U34 carboxymethyltransferase.